The chain runs to 77 residues: MKLMIFTGLVLFAIVSLIEAQAENGKPCLPEYKVCTHAPGNCCSDLVCDCYGRYKSGAQIGRNCFCLQKGVIYKREN.

A signal peptide spans 1–20; sequence MKLMIFTGLVLFAIVSLIEA. A propeptide spanning residues 21–26 is cleaved from the precursor; it reads QAENGK.

This sequence belongs to the neurotoxin 19 (CSTX) family. 08 (U8-Lctx) subfamily. In terms of processing, contains 4 disulfide bonds. In terms of tissue distribution, expressed by the venom gland.

It localises to the secreted. The sequence is that of U8-lycotoxin-Ls1o from Lycosa singoriensis (Wolf spider).